A 373-amino-acid chain; its full sequence is LIM domain-binding protein 2 (373 aa).

Disordered stretches follow at residues 244 to 287 (APPA…KTPA) and 327 to 373 (QYDA…QASQ). The span at 263–280 (STSSTSNSSAGNTTNSAG) shows a compositional bias: low complexity. One can recognise an LIM interaction domain (LID) domain in the interval 298–337 (DVMVVGEPTLMGGEFGDEDERLITRLENTQYDAANGMDDE). Polar residues predominate over residues 341–373 (NNSPALGNNSPWNSKPPATQETKSENAPPQASQ).

Belongs to the LDB family. In terms of assembly, interacts with LHX9. Interacts with SLK; leading to negatively regulate SLK kinase activity. Interacts with LMO4. As to quaternary structure, interacts with PITX1. Interacts with LHX3. In terms of processing, ubiquitinated by RLIM/RNF12, leading to its degradation by the proteasome. Expressed in multiple tissues including heart, brain, liver, kidney, testis, lung and muscle, with expression highest in the brain, trigeminal ganglia, and lung.

It is found in the nucleus. Transcription cofactor. Binds to the LIM domain of a wide variety of LIM domain-containing transcription factors. Its function is as follows. Regulates the transcriptional activity of LIM-containing proteins such as LHX3 or PITX1. This Mus musculus (Mouse) protein is LIM domain-binding protein 2 (Ldb2).